A 319-amino-acid polypeptide reads, in one-letter code: Ribosomal RNA small subunit methyltransferase H (319 aa).

S-adenosyl-L-methionine-binding positions include 39–41, D59, F83, D104, and Q111; that span reads GGH.

The protein belongs to the methyltransferase superfamily. RsmH family.

The protein localises to the cytoplasm. It carries out the reaction cytidine(1402) in 16S rRNA + S-adenosyl-L-methionine = N(4)-methylcytidine(1402) in 16S rRNA + S-adenosyl-L-homocysteine + H(+). Its function is as follows. Specifically methylates the N4 position of cytidine in position 1402 (C1402) of 16S rRNA. The chain is Ribosomal RNA small subunit methyltransferase H from Ralstonia pickettii (strain 12J).